The sequence spans 874 residues: Alanine--tRNA ligase (874 aa).

4 residues coordinate Zn(2+): His564, His568, Cys665, and His669.

Belongs to the class-II aminoacyl-tRNA synthetase family. Zn(2+) serves as cofactor.

The protein resides in the cytoplasm. The catalysed reaction is tRNA(Ala) + L-alanine + ATP = L-alanyl-tRNA(Ala) + AMP + diphosphate. Functionally, catalyzes the attachment of alanine to tRNA(Ala) in a two-step reaction: alanine is first activated by ATP to form Ala-AMP and then transferred to the acceptor end of tRNA(Ala). Also edits incorrectly charged Ser-tRNA(Ala) and Gly-tRNA(Ala) via its editing domain. The polypeptide is Alanine--tRNA ligase (Burkholderia lata (strain ATCC 17760 / DSM 23089 / LMG 22485 / NCIMB 9086 / R18194 / 383)).